The primary structure comprises 423 residues: UDP-N-acetylglucosamine 1-carboxyvinyltransferase 2 (423 aa).

23–24 (KN) contributes to the phosphoenolpyruvate binding site. A UDP-N-acetyl-alpha-D-glucosamine-binding site is contributed by R96. Residue C120 is the Proton donor of the active site. 2-(S-cysteinyl)pyruvic acid O-phosphothioketal is present on C120. UDP-N-acetyl-alpha-D-glucosamine-binding positions include 125-129 (RPIDL), D309, and V331.

The protein belongs to the EPSP synthase family. MurA subfamily.

Its subcellular location is the cytoplasm. It catalyses the reaction phosphoenolpyruvate + UDP-N-acetyl-alpha-D-glucosamine = UDP-N-acetyl-3-O-(1-carboxyvinyl)-alpha-D-glucosamine + phosphate. Its pathway is cell wall biogenesis; peptidoglycan biosynthesis. Cell wall formation. Adds enolpyruvyl to UDP-N-acetylglucosamine. This Streptococcus agalactiae serotype Ia (strain ATCC 27591 / A909 / CDC SS700) protein is UDP-N-acetylglucosamine 1-carboxyvinyltransferase 2.